Reading from the N-terminus, the 69-residue chain is Sec-independent protein translocase protein TatA (69 aa).

A helical transmembrane segment spans residues 1 to 21 (MFGLGTMEMVIILVIVLVIFG). Residues 44–69 (NAEDDAPAEPEVSKPAAAESTEKKDA) are disordered.

The protein belongs to the TatA/E family. As to quaternary structure, the Tat system comprises two distinct complexes: a TatABC complex, containing multiple copies of TatA, TatB and TatC subunits, and a separate TatA complex, containing only TatA subunits. Substrates initially bind to the TatABC complex, which probably triggers association of the separate TatA complex to form the active translocon.

The protein localises to the cell inner membrane. Part of the twin-arginine translocation (Tat) system that transports large folded proteins containing a characteristic twin-arginine motif in their signal peptide across membranes. TatA could form the protein-conducting channel of the Tat system. This is Sec-independent protein translocase protein TatA from Magnetococcus marinus (strain ATCC BAA-1437 / JCM 17883 / MC-1).